Reading from the N-terminus, the 1091-residue chain is Voltage-dependent calcium channel subunit alpha-2/delta-3 (1091 aa).

Residues 1–33 (MAGPGSLCCASRGASALLATALLYAALGDVVRS) form the signal peptide. Topologically, residues 34 to 1068 (EQQIPLSVVK…HPEENARECG (1035 aa)) are extracellular. N-linked (GlcNAc...) asparagine glycosylation occurs at asparagine 166. Positions 256–438 (DVVILVDVSG…ENVMEYLHVL (183 aa)) constitute a VWFA domain. A divalent metal cation-binding residues include aspartate 262, serine 264, and serine 266. The MIDAS-like motif signature appears at 262–266 (DVSGS). Asparagine 309 carries an N-linked (GlcNAc...) asparagine glycan. A disulfide bridge links cysteine 412 with cysteine 1055. Residues 452 to 549 (WTEAYIDSTL…RPLYEEGKKR (98 aa)) form the Cache domain. N-linked (GlcNAc...) asparagine glycans are attached at residues asparagine 553 and asparagine 632. A Phosphotyrosine modification is found at tyrosine 924. A helical membrane pass occupies residues 1069 to 1089 (GASSLQAQAALLLLPLVSSLF). The Cytoplasmic portion of the chain corresponds to 1090–1091 (SR).

It belongs to the calcium channel subunit alpha-2/delta family. Dimer formed of alpha-2-2 and delta-2 chains; disulfide-linked. Voltage-dependent calcium channels are multisubunit complexes, consisting of alpha-1 (CACNA1), alpha-2 (CACNA2D), beta (CACNB) and delta (CACNA2D) subunits in a 1:1:1:1 ratio. Post-translationally, N-glycosylated. In terms of processing, may be proteolytically processed into subunits alpha-2-3 and delta-3 that are disulfide-linked. It is however unclear whether such cleavage really takes place in vivo and has a functional role. Brain-specific. Predominantly expressed in the caudate putamen, entorhinal complex, hippocampus and cortex.

The protein resides in the membrane. The alpha-2/delta subunit of voltage-dependent calcium channels regulates calcium current density and activation/inactivation kinetics of the calcium channel. Acts as a regulatory subunit for P/Q-type calcium channel (CACNA1A), N-type (CACNA1B), L-type (CACNA1C OR CACNA1D) but not T-type (CACNA1G). In Mus musculus (Mouse), this protein is Voltage-dependent calcium channel subunit alpha-2/delta-3 (Cacna2d3).